The primary structure comprises 966 residues: Protein mes-1 (966 aa).

A signal peptide spans 1–19; sequence MKIHHFLTLLCTFLPLTTT. The Extracellular portion of the chain corresponds to 20-470; it reads ALTNSTPLSL…QASDIPTSVE (451 aa). Residues Asn-62, Asn-126, Asn-183, Asn-214, Asn-251, and Asn-372 are each glycosylated (N-linked (GlcNAc...) asparagine). A helical membrane pass occupies residues 471-491; that stretch reads LMAVVLATSAIFALIALFLLY. The Cytoplasmic segment spans residues 492-966; it reads RKRKRDKKAR…FKSVNVAATV (475 aa). Positions 656–966 constitute a Protein kinase domain; it reads HNFNERIEKQ…FKSVNVAATV (311 aa). ATP contacts are provided by residues 662 to 670 and Lys-685; that span reads IEKQAYWLM.

This sequence belongs to the protein kinase superfamily.

The protein resides in the cell membrane. In terms of biological role, during early embryogenesis, controls asymmetric cell division and the asymmetric localization of P granules of germline precursor P2 and its descendant P3. Probably upstream of tyrosine kinase src-1, plays a role in endoderm development by controlling spindle orientation during EMS blastomere cell division. Controls EMS spindle orientation probably by promoting lin-5 and gpr-1/2 enrichment at, and let-99 exclusion from the junction between P2 and EMS cells. The protein is Protein mes-1 of Caenorhabditis elegans.